The sequence spans 316 residues: Protoheme IX farnesyltransferase (316 aa).

9 consecutive transmembrane segments (helical) span residues 32–52 (VMSL…GHIN), 53–73 (PVLG…SGAL), 93–113 (IPAG…LSGF), 116–136 (VILG…TIFF), 152–172 (NIVI…ACVT), 180–200 (TVLF…LALF), 221–241 (VTKH…VLPS), 252–271 (LVAA…VWRM), and 289–309 (IFYL…AILV).

This sequence belongs to the UbiA prenyltransferase family. Protoheme IX farnesyltransferase subfamily.

The protein resides in the cell inner membrane. It catalyses the reaction heme b + (2E,6E)-farnesyl diphosphate + H2O = Fe(II)-heme o + diphosphate. Its pathway is porphyrin-containing compound metabolism; heme O biosynthesis; heme O from protoheme: step 1/1. Functionally, converts heme B (protoheme IX) to heme O by substitution of the vinyl group on carbon 2 of heme B porphyrin ring with a hydroxyethyl farnesyl side group. This Rhizobium etli (strain ATCC 51251 / DSM 11541 / JCM 21823 / NBRC 15573 / CFN 42) protein is Protoheme IX farnesyltransferase.